The chain runs to 151 residues: Brain ribonuclease (151 aa).

Positions 1–25 are disordered; that stretch reads KESAAAKFRRQHMDAGSSSSGNSNY. Residues lysine 7 and arginine 10 each contribute to the substrate site. Histidine 12 (proton acceptor) is an active-site residue. Disulfide bonds link cysteine 26/cysteine 84, cysteine 40/cysteine 95, cysteine 58/cysteine 110, and cysteine 65/cysteine 72. Substrate is bound at residue 41 to 45; the sequence is KPVNT. Asparagine 62 carries N-linked (GlcNAc...) asparagine glycosylation. Positions 66 and 85 each coordinate substrate. Histidine 119 (proton donor) is an active-site residue. A glycan (O-linked (GalNAc...) threonine) is linked at threonine 129. The O-linked (GalNAc...) serine glycan is linked to serine 133.

The protein belongs to the pancreatic ribonuclease family.

Its subcellular location is the secreted. This is Brain ribonuclease (BRN) from Axis porcinus (Hog deer).